A 282-amino-acid chain; its full sequence is tRNA (guanine-N(1)-)-methyltransferase (282 aa).

Positions 77 to 114 (TGPAATVSDLESSAEHKRNLRPATTNGDAEPLGEKAGG) are disordered. S-adenosyl-L-methionine-binding positions include glycine 149 and 173-178 (IGDYVL).

The protein belongs to the RNA methyltransferase TrmD family. Homodimer.

It localises to the cytoplasm. It carries out the reaction guanosine(37) in tRNA + S-adenosyl-L-methionine = N(1)-methylguanosine(37) in tRNA + S-adenosyl-L-homocysteine + H(+). In terms of biological role, specifically methylates guanosine-37 in various tRNAs. This is tRNA (guanine-N(1)-)-methyltransferase from Corynebacterium jeikeium (strain K411).